Consider the following 215-residue polypeptide: Adenylate kinase (215 aa).

An ATP-binding site is contributed by 10-15 (GAGKGT). An NMP region spans residues 30–59 (STGDIFRKNISENTPLGMEARSYMDKGLLV). AMP is bound by residues threonine 31, arginine 36, 57-59 (LLV), 85-88 (GFPR), and glutamine 92. The tract at residues 126 to 163 (GRRVCTSCGGSFHIKFNPPTIDGKCNLCGSDIVQRKDD) is LID. ATP is bound at residue arginine 127. 2 residues coordinate Zn(2+): cysteine 130 and cysteine 133. Residue 136–137 (SF) participates in ATP binding. The Zn(2+) site is built by cysteine 150 and cysteine 153. 2 residues coordinate AMP: arginine 160 and arginine 171. Lysine 199 is a binding site for ATP.

It belongs to the adenylate kinase family. In terms of assembly, monomer.

It localises to the cytoplasm. The catalysed reaction is AMP + ATP = 2 ADP. Its pathway is purine metabolism; AMP biosynthesis via salvage pathway; AMP from ADP: step 1/1. Functionally, catalyzes the reversible transfer of the terminal phosphate group between ATP and AMP. Plays an important role in cellular energy homeostasis and in adenine nucleotide metabolism. In Clostridium botulinum (strain Alaska E43 / Type E3), this protein is Adenylate kinase.